The sequence spans 583 residues: Mitogen-activated protein kinase 4 (583 aa).

A Protein kinase domain is found at 20 to 312 (FIDFQPLGFG…AEMGLQHPYM (293 aa)). Residues 26–34 (LGFGVNGLV) and lysine 49 each bind ATP. The active-site Proton acceptor is aspartate 149. Residue serine 186 is modified to Phosphoserine; by PAK1, PAK2 and PAK3. Positions 186–188 (SEG) match the SEG motif motif. Positions 328-333 (FRIEDE) match the FRIEDE motif motif. Basic and acidic residues-rich tracts occupy residues 366–379 (DRCQDASEVQRDPR) and 391–410 (VDPRKDSQSSSERFLEQSHS). A disordered region spans residues 366 to 410 (DRCQDASEVQRDPRAGSTPLAEDVQVDPRKDSQSSSERFLEQSHS). The residue at position 430 (serine 430) is a Phosphoserine. Residues 495 to 531 (STQSGSERASPPPDAPEPRLSASPPGHPTPIDGGASP) are disordered.

The protein belongs to the protein kinase superfamily. CMGC Ser/Thr protein kinase family. MAP kinase subfamily. As to quaternary structure, homodimer. Heterodimer with ERK3/MAPK6. Interacts with (via FRIEDE motif) MAPKAPK5. It depends on Mg(2+) as a cofactor. Post-translationally, phosphorylated at Ser-186 by PAK1, PAK2 and PAK3 resulting in catalytic activation. Phosphorylated by MAPKAPK5 at other sites.

The protein resides in the cytoplasm. It is found in the nucleus. The catalysed reaction is L-seryl-[protein] + ATP = O-phospho-L-seryl-[protein] + ADP + H(+). The enzyme catalyses L-threonyl-[protein] + ATP = O-phospho-L-threonyl-[protein] + ADP + H(+). With respect to regulation, activated by phosphorylation at Ser-186. Its function is as follows. Atypical MAPK protein. Phosphorylates microtubule-associated protein 2 (MAP2) and MAPKAPK5. The precise role of the complex formed with MAPKAPK5 is still unclear, but the complex follows a complex set of phosphorylation events: upon interaction with atypical MAPKAPK5, ERK4/MAPK4 is phosphorylated at Ser-186 and then mediates phosphorylation and activation of MAPKAPK5, which in turn phosphorylates ERK4/MAPK4. May promote entry in the cell cycle. The chain is Mitogen-activated protein kinase 4 (Mapk4) from Mus musculus (Mouse).